We begin with the raw amino-acid sequence, 123 residues long: Small ribosomal subunit protein uS13 (123 aa).

The segment at 93-123 (RRNLPVRGQKTKTNARTRKGPKRAIGGKKKK) is disordered.

The protein belongs to the universal ribosomal protein uS13 family. Part of the 30S ribosomal subunit. Forms a loose heterodimer with protein S19. Forms two bridges to the 50S subunit in the 70S ribosome.

In terms of biological role, located at the top of the head of the 30S subunit, it contacts several helices of the 16S rRNA. In the 70S ribosome it contacts the 23S rRNA (bridge B1a) and protein L5 of the 50S subunit (bridge B1b), connecting the 2 subunits; these bridges are implicated in subunit movement. Contacts the tRNAs in the A and P-sites. This is Small ribosomal subunit protein uS13 from Clostridium botulinum (strain Loch Maree / Type A3).